The chain runs to 345 residues: Uroporphyrinogen decarboxylase (345 aa).

Residues 23 to 27, Asp-73, Tyr-149, Thr-203, and His-319 contribute to the substrate site; that span reads RQAGR.

This sequence belongs to the uroporphyrinogen decarboxylase family. In terms of assembly, homodimer.

Its subcellular location is the cytoplasm. It catalyses the reaction uroporphyrinogen III + 4 H(+) = coproporphyrinogen III + 4 CO2. The protein operates within porphyrin-containing compound metabolism; protoporphyrin-IX biosynthesis; coproporphyrinogen-III from 5-aminolevulinate: step 4/4. Functionally, catalyzes the decarboxylation of four acetate groups of uroporphyrinogen-III to yield coproporphyrinogen-III. The chain is Uroporphyrinogen decarboxylase from Vesicomyosocius okutanii subsp. Calyptogena okutanii (strain HA).